We begin with the raw amino-acid sequence, 207 residues long: Ubiquitin-conjugating enzyme E2 E3 (207 aa).

The segment covering 1-10 has biased composition (basic and acidic residues); that stretch reads MSSDRQRSDD. The segment at 1 to 63 is disordered; sequence MSSDRQRSDD…KTTAKLSTSA (63 aa). Residue S2 is modified to N-acetylserine. S8 carries the post-translational modification Phosphoserine. Over residues 50-63 the composition is skewed to low complexity; it reads KLSSKTTAKLSTSA. The region spanning 61-207 is the UBC core domain; the sequence is TSAKRIQKEL…ARQWTKRYAT (147 aa). The Glycyl thioester intermediate role is filled by C145.

This sequence belongs to the ubiquitin-conjugating enzyme family. The ubiquitin-loaded form interacts specifically with importin-11 (IPO11), leading to its import into the nucleus. Interacts with NEDD4L.

The protein localises to the nucleus. The protein resides in the cytoplasm. It catalyses the reaction S-ubiquitinyl-[E1 ubiquitin-activating enzyme]-L-cysteine + [E2 ubiquitin-conjugating enzyme]-L-cysteine = [E1 ubiquitin-activating enzyme]-L-cysteine + S-ubiquitinyl-[E2 ubiquitin-conjugating enzyme]-L-cysteine.. The protein operates within protein modification; protein ubiquitination. Functionally, accepts ubiquitin from the E1 complex and catalyzes its covalent attachment to other proteins. In vitro catalyzes 'Lys-11'- and 'Lys-48'-, as well as 'Lys-63'-linked polyubiquitination. Participates in the regulation of transepithelial sodium transport in renal cells. The polypeptide is Ubiquitin-conjugating enzyme E2 E3 (UBE2E3) (Bos taurus (Bovine)).